We begin with the raw amino-acid sequence, 203 residues long: Large ribosomal subunit protein uL18 (203 aa).

It belongs to the universal ribosomal protein uL18 family. Part of the 50S ribosomal subunit. Contacts the 5S and 23S rRNAs.

This is one of the proteins that bind and probably mediate the attachment of the 5S RNA into the large ribosomal subunit, where it forms part of the central protuberance. The protein is Large ribosomal subunit protein uL18 of Pyrococcus furiosus (strain ATCC 43587 / DSM 3638 / JCM 8422 / Vc1).